The primary structure comprises 460 residues: Argininosuccinate lyase (460 aa).

The protein belongs to the lyase 1 family. Argininosuccinate lyase subfamily.

The protein resides in the cytoplasm. It catalyses the reaction 2-(N(omega)-L-arginino)succinate = fumarate + L-arginine. The protein operates within amino-acid biosynthesis; L-arginine biosynthesis; L-arginine from L-ornithine and carbamoyl phosphate: step 3/3. In Leuconostoc mesenteroides subsp. mesenteroides (strain ATCC 8293 / DSM 20343 / BCRC 11652 / CCM 1803 / JCM 6124 / NCDO 523 / NBRC 100496 / NCIMB 8023 / NCTC 12954 / NRRL B-1118 / 37Y), this protein is Argininosuccinate lyase.